The sequence spans 335 residues: Dihydroorotate dehydrogenase (quinone) (335 aa).

Residues 59-63 and Thr-83 each bind FMN; that span reads AGLDK. Lys-63 contributes to the substrate binding site. Position 108 to 112 (108 to 112) interacts with substrate; the sequence is NRMGF. Residues Asn-136 and Asn-169 each contribute to the FMN site. Asn-169 is a substrate binding site. Ser-172 (nucleophile) is an active-site residue. Asn-174 contacts substrate. 2 residues coordinate FMN: Lys-214 and Thr-242. 243–244 serves as a coordination point for substrate; it reads NT. Residues Gly-265, Gly-294, and 315–316 each bind FMN; that span reads YS.

This sequence belongs to the dihydroorotate dehydrogenase family. Type 2 subfamily. As to quaternary structure, monomer. FMN serves as cofactor.

Its subcellular location is the cell membrane. It catalyses the reaction (S)-dihydroorotate + a quinone = orotate + a quinol. The protein operates within pyrimidine metabolism; UMP biosynthesis via de novo pathway; orotate from (S)-dihydroorotate (quinone route): step 1/1. Catalyzes the conversion of dihydroorotate to orotate with quinone as electron acceptor. In Neisseria gonorrhoeae (strain ATCC 700825 / FA 1090), this protein is Dihydroorotate dehydrogenase (quinone).